A 949-amino-acid chain; its full sequence is Syndetin (949 aa).

The segment at 1–28 is disordered; sequence MQKIKSLMTRQGLRSPQESVHDLSPIEN. Polar residues predominate over residues 8 to 18; that stretch reads MTRQGLRSPQE. Coiled-coil stretches lie at residues 82–104 and 198–226; these read SLQE…LERV and YSCI…LSKI. Residues 509-581 form a disordered region; that stretch reads FEIQADSKDD…ETLRSRKKSD (73 aa). Residues 569–581 show a composition bias toward basic and acidic residues; it reads VSRETLRSRKKSD.

The protein belongs to the syndetin family. As to quaternary structure, component of the endosome-associated retrograde protein (EARP) complex.

The protein resides in the recycling endosome. It localises to the membrane. Acts as a component of the EARP complex that is involved in endocytic recycling. The EARP complex associates with Rab4-positive endosomes and promotes recycling of internalized transferrin receptor (TFRC) to the plasma membrane. This Gallus gallus (Chicken) protein is Syndetin.